The chain runs to 298 residues: Quinolinate synthase (298 aa).

Iminosuccinate is bound by residues His-19 and Ser-36. Cys-81 is a binding site for [4Fe-4S] cluster. Iminosuccinate-binding positions include 107–109 and Ser-124; that span reads YVN. Cys-168 serves as a coordination point for [4Fe-4S] cluster. Iminosuccinate-binding positions include 193 to 195 and Thr-210; that span reads HPE. Position 254 (Cys-254) interacts with [4Fe-4S] cluster.

This sequence belongs to the quinolinate synthase family. Type 2 subfamily. The cofactor is [4Fe-4S] cluster.

Its subcellular location is the cytoplasm. The catalysed reaction is iminosuccinate + dihydroxyacetone phosphate = quinolinate + phosphate + 2 H2O + H(+). It participates in cofactor biosynthesis; NAD(+) biosynthesis; quinolinate from iminoaspartate: step 1/1. With respect to regulation, inhibited by 4,5 dithiohydroxyphthalic acid (DTHPA) analogs, which bind to the catalytic iron site of the [4Fe-4S] cluster. Functionally, catalyzes the condensation of iminoaspartate with dihydroxyacetone phosphate to form quinolinate. This is Quinolinate synthase from Thermotoga maritima (strain ATCC 43589 / DSM 3109 / JCM 10099 / NBRC 100826 / MSB8).